Reading from the N-terminus, the 441-residue chain is Myocyte-specific enhancer factor 2C (441 aa).

The region spanning 1–61 is the MADS-box domain; sequence MGRKKIQITR…NKLFQYASTD (61 aa). An N6-acetyllysine modification is found at lysine 4. Residues 58–86 constitute a DNA-binding region (mef2-type); that stretch reads ASTDMDKVLLKYTEYNEPHESRTNSDIVE. Phosphoserine; by CK2 is present on serine 59. The disordered stretch occupies residues 91-116; it reads KGLNGCDSPDPDADDSVGHSPESEDK. 3 positions are modified to phosphoserine: serine 98, serine 106, and serine 110. Lysine 116 and lysine 119 each carry N6-acetyllysine. Positions 180-224 are disordered; it reads NSMSPGVTHRPPSAGNTGGLMGGDLTSGAGTSAGNGYGNPRNSPG. A phosphoserine mark is found at serine 222 and serine 228. An N6-acetyllysine mark is found at lysine 234 and lysine 239. Serine 240 is subject to Phosphoserine. Residues lysine 252 and lysine 264 each carry the N6-acetyllysine modification. The beta domain stretch occupies residues 271 to 278; it reads SEDVDLLL. A phosphothreonine; by MAPK7 and MAPK14 mark is found at threonine 293 and threonine 300. Residues 353-441 are disordered; it reads QHLHSMPPSA…RMRLSEGWAT (89 aa). Residues 362-377 show a composition bias toward polar residues; sequence ALSQLGDRTTTPSRYP. Residue serine 387 is modified to Phosphoserine; by MAPK7. Low complexity predominate over residues 387-400; that stretch reads SPVDSLSSCSSSYD. Positions 401 to 411 are enriched in basic and acidic residues; it reads GSDREDHRNEF. Phosphoserine is present on serine 413.

This sequence belongs to the MEF2 family. As to quaternary structure, forms a complex with class II HDACs in undifferentiating cells. On myogenic differentiation, HDACs are released into the cytoplasm allowing MEF2s to interact with other proteins for activation. Interacts with EP300 in differentiating cells; the interaction acetylates MEF2C leading to increased DNA binding and activation. Interacts with HDAC7 and CARM1. Interacts with HDAC4, HDAC7 and HDAC9; the interaction with HDACs represses transcriptional activity. Interacts with LPIN1. Interacts with MYOCD. Interacts with AKAP13. Interacts with FOXK1; the interaction inhibits MEF2C transactivation activity. Interacts (via N-terminus) with HABP4; this interaction decreases DNA-binding activity of MEF2C in myocardial cells in response to mechanical stress. Interacts with JPH2; interaction specifically takes place with the Junctophilin-2 N-terminal fragment cleavage product of JPH2. Interacts (via MADS box) with SOX18. Interacts with PHF7; the interaction promotes MEF2C binding to its transcription targets. Phosphorylation on Ser-59 enhances DNA binding activity. In terms of processing, acetylated by p300 on several sites in diffentiating myocytes. Acetylation on Lys-4 increases DNA binding and transactivation. Post-translationally, proteolytically cleaved in cerebellar granule neurons, probably by caspase 7, following neurotoxicity.

It localises to the nucleus. The protein localises to the cytoplasm. The protein resides in the sarcoplasm. Its function is as follows. Transcription activator which binds specifically to the MEF2 element present in the regulatory regions of many muscle-specific genes. Controls cardiac morphogenesis and myogenesis, and is also involved in vascular development. Enhances transcriptional activation mediated by SOX18. Plays an essential role in hippocampal-dependent learning and memory by suppressing the number of excitatory synapses and thus regulating basal and evoked synaptic transmission. Crucial for normal neuronal development, distribution, and electrical activity in the neocortex. Necessary for proper development of megakaryocytes and platelets and for bone marrow B-lymphopoiesis. Required for B-cell survival and proliferation in response to BCR stimulation, efficient IgG1 antibody responses to T-cell-dependent antigens and for normal induction of germinal center B-cells. May also be involved in neurogenesis and in the development of cortical architecture. The chain is Myocyte-specific enhancer factor 2C from Bos taurus (Bovine).